Reading from the N-terminus, the 234-residue chain is Thioredoxin-dependent peroxide reductase, mitochondrial (234 aa).

The N-terminal 30 residues, 1–30 (MSFVARSLIRNVPLMGKAILSQQKQIAARL), are a transit peptide targeting the mitochondrion. Residues 40 to 198 (VRVQQPAPDF…VLRLIKAFQF (159 aa)) form the Thioredoxin domain. The active-site Cysteine sulfenic acid (-SOH) intermediate is Cys85.

It belongs to the peroxiredoxin family. AhpC/Prx1 subfamily. Homodimer; disulfide-linked, upon oxidation. 6 homodimers assemble to form a ring-like dodecamer. Also exists as a monomer, however the monomeric form is present at a much lower level than the homodimeric form. As to expression, expressed in thoracic flight muscles (at protein level). Detected in the head and body (at protein level).

It is found in the mitochondrion. It catalyses the reaction a hydroperoxide + [thioredoxin]-dithiol = an alcohol + [thioredoxin]-disulfide + H2O. Functionally, thiol-specific peroxidase that catalyzes the reduction of hydrogen peroxide and organic hydroperoxides to water and alcohols, respectively. Plays a role in cell protection against oxidative stress by detoxifying peroxides. May be involved in aging-associated changes in the responsiveness to oxidative stress. Involved in the maintenance of global thiol redox homeostasis. Functions in the central nervous system (CNS) and in motor neurons and is essential for normal motor function. In Drosophila melanogaster (Fruit fly), this protein is Thioredoxin-dependent peroxide reductase, mitochondrial.